The primary structure comprises 263 residues: Proenkephalin-A (263 aa).

The first 24 residues, 1–24 (MARFLGLCTWLLALGPGLLATVRA), serve as a signal peptide directing secretion. Intrachain disulfides connect C26–C48, C30–C52, and C33–C65. Propeptides lie at residues 192 to 203 (SPHLEDETKELQ) and 213 to 223 (VGRPEWWMDYQ). Residue S247 is modified to Phosphoserine.

Belongs to the opioid neuropeptide precursor family. Post-translationally, proenkephalin-A is cleaved by CTSL to generate Met-enkephalin. Processed and degraded by ACE. In terms of processing, probably cleaved by ACE. Post-translationally, processed by ACE to generate Met-enkephalin in the nucleus accumbens of the brain. The N-terminal domain contains 6 conserved cysteines thought to be involved in disulfide bonding and/or processing. Secreted by neuroendocrine chromaffin cells through cromaffin granules.

The protein localises to the cytoplasmic vesicle. It is found in the secretory vesicle. The protein resides in the chromaffin granule lumen. It localises to the secreted. Functionally, neuropeptide that competes with and mimic the effects of opiate drugs. They play a role in a number of physiologic functions, including pain perception and responses to stress. In terms of biological role, met-enkephalin-Arg-Phe neuropeptide acts as a strong ligand of Mu-type opioid receptor OPRM1. Met-enkephalin-Arg-Phe-binding to OPRM1 in the nucleus accumbens of the brain increases activation of OPRM1, leading to long-term synaptic depression of glutamate release. Increases glutamate release in the striatum and decreases GABA concentration in the striatum. Its function is as follows. Increases glutamate release in the striatum. Functionally, enkelytin possesses antibacterial activity against Gram-positive bacteria such as Micrococcus luteus and Bacillus megaterium. The chain is Proenkephalin-A (PENK) from Bos taurus (Bovine).